The chain runs to 477 residues: Epoxyalcohol synthase CYP5164B1 (477 aa).

Cys-421 is a binding site for heme.

Belongs to the cytochrome P450 family. Heme serves as cofactor.

The catalysed reaction is (9S)-hydroperoxy-(10E,12Z)-octadecadienoate = (11S)-hydroxy-(9S,10S)-epoxy-(12Z)-octadecenoate. It catalyses the reaction (13S)-hydroperoxy-(9Z,11E)-octadecadienoate = 11-hydroxy-12,13-epoxy-(9Z)-octadecenoate. It participates in lipid metabolism; oxylipin biosynthesis. Cytochrome P450 epoxyalcohol synthase involved in the metabolism of oxylipins 'ectocarpins' natural products, such as hybridalactone, ecklonilactones and derivatives. Isomerizes the hydroperoxides into epoxyalcohols via epoxyallylic radical. Can use linoleic acid 9-hydroperoxide ((9S,10E,12Z)-9-hydroperoxy-10,12-octadecadienoic, 9-HPOD) as preferred substrate to produce (9S,10S,11S,12Z)-9,10-epoxy-11-hydroxy-12-octadecenoic acid and, to a lower extent, active with linoleate 13-hydroperoxide ((9Z,11E,13S)-13-hydroperoxy-9,11-octadecadienoic, 13-HPOD) to produce 11-hydroxy-12,13-epoxy-9-octadecenoic acid. No activity toward alpha-linolenic acid 9- and 13-hydroperoxides, and toward eicosapentaenoic acid 15-hydroperoxide. In Ectocarpus siliculosus (Brown alga), this protein is Epoxyalcohol synthase CYP5164B1.